A 307-amino-acid chain; its full sequence is Putative F-box/LRR-repeat protein 22 (307 aa).

Residues 1 to 15 are compositionally biased toward polar residues; it reads MVTSSSSPPLATSQL. Residues 1-26 form a disordered region; sequence MVTSSSSPPLATSQLPVMKGEEKPSN. The F-box domain occupies 24-71; that stretch reads PSNWAELPPDLLSSILLRLSPLEILENARKVCRSWRRVSKDPLIWRRI. 5 LRR repeats span residues 108-133, 158-183, 185-210, 212-237, and 244-270; these read WRFQ…RVKG, YCSI…KLVG, WSHL…HLQL, SNGL…DLRQ, and FGDL…DYNY. Acidic residues predominate over residues 279 to 289; it reads IEDEKGEEEEN. Positions 279-307 are disordered; sequence IEDEKGEEEENYSYGSDDTEYGYRRSADF.

This is Putative F-box/LRR-repeat protein 22 (FBL22) from Arabidopsis thaliana (Mouse-ear cress).